We begin with the raw amino-acid sequence, 546 residues long: Amidophosphoribosyltransferase (546 aa).

Low complexity predominate over residues 1-26; that stretch reads MSAPQQQQQSQQKQQQHVRVVEQQQV. A disordered region spans residues 1–39; sequence MSAPQQQQQSQQKQQQHVRVVEQQQVEPAEAVTSSMESE. The propeptide occupies 1 to 53; it reads MSAPQQQQQSQQKQQQHVRVVEQQQVEPAEAVTSSMESESISASKELTGLTHE. C54 (nucleophile) is an active-site residue. The 249-residue stretch at 54–302 folds into the Glutamine amidotransferase type-2 domain; that stretch reads CGVFGAIACG…PGEIVELSRS (249 aa). A Phosphoserine modification is found at S113. T114 is subject to Phosphothreonine. S120 is subject to Phosphoserine. C321 provides a ligand contact to [4Fe-4S] cluster. The Mg(2+) site is built by S368, D430, and D431. The [4Fe-4S] cluster site is built by C467, C528, and C531.

It in the C-terminal section; belongs to the purine/pyrimidine phosphoribosyltransferase family. Mg(2+) serves as cofactor. [4Fe-4S] cluster is required as a cofactor.

The catalysed reaction is 5-phospho-beta-D-ribosylamine + L-glutamate + diphosphate = 5-phospho-alpha-D-ribose 1-diphosphate + L-glutamine + H2O. The protein operates within purine metabolism; IMP biosynthesis via de novo pathway; N(1)-(5-phospho-D-ribosyl)glycinamide from 5-phospho-alpha-D-ribose 1-diphosphate: step 1/2. In terms of biological role, involved in the first step (and regulatory point) of the de novo biosynthesis of purine nucleotides, where it catalyzes the transfer of glutamine amide to 5-phospho-alpha-D-ribose 1-diphosphate. This Drosophila melanogaster (Fruit fly) protein is Amidophosphoribosyltransferase (Prat).